We begin with the raw amino-acid sequence, 242 residues long: Carboxy-S-adenosyl-L-methionine synthase (242 aa).

S-adenosyl-L-methionine contacts are provided by residues tyrosine 39, 64–66, 89–90, 117–118, asparagine 132, and arginine 199; these read GCS, DN, and DI.

It belongs to the class I-like SAM-binding methyltransferase superfamily. Cx-SAM synthase family. Homodimer.

It catalyses the reaction prephenate + S-adenosyl-L-methionine = carboxy-S-adenosyl-L-methionine + 3-phenylpyruvate + H2O. Functionally, catalyzes the conversion of S-adenosyl-L-methionine (SAM) to carboxy-S-adenosyl-L-methionine (Cx-SAM). In Aliivibrio fischeri (strain ATCC 700601 / ES114) (Vibrio fischeri), this protein is Carboxy-S-adenosyl-L-methionine synthase.